Here is a 136-residue protein sequence, read N- to C-terminus: ATP synthase epsilon chain (136 aa).

It belongs to the ATPase epsilon chain family. In terms of assembly, F-type ATPases have 2 components, CF(1) - the catalytic core - and CF(0) - the membrane proton channel. CF(1) has five subunits: alpha(3), beta(3), gamma(1), delta(1), epsilon(1). CF(0) has three main subunits: a, b and c.

It is found in the cell membrane. Its function is as follows. Produces ATP from ADP in the presence of a proton gradient across the membrane. The polypeptide is ATP synthase epsilon chain (Herpetosiphon aurantiacus (strain ATCC 23779 / DSM 785 / 114-95)).